The primary structure comprises 713 residues: Polyribonucleotide nucleotidyltransferase (713 aa).

Mg(2+)-binding residues include Asp493 and Asp499. The region spanning 560 to 619 (PRMITIKINPEKIRDVIGKGGSVIRALTEETGTTIDISDDGVVTIASTNSEGMAEAKKRI) is the KH domain. Residues 629–697 (GHVYEGTVLK…EKGRVRLSAK (69 aa)) form the S1 motif domain.

Belongs to the polyribonucleotide nucleotidyltransferase family. Mg(2+) serves as cofactor.

The protein localises to the cytoplasm. The catalysed reaction is RNA(n+1) + phosphate = RNA(n) + a ribonucleoside 5'-diphosphate. Functionally, involved in mRNA degradation. Catalyzes the phosphorolysis of single-stranded polyribonucleotides processively in the 3'- to 5'-direction. The chain is Polyribonucleotide nucleotidyltransferase from Burkholderia pseudomallei (strain 1106a).